The sequence spans 130 residues: Small ribosomal subunit protein uS8 (130 aa).

Belongs to the universal ribosomal protein uS8 family. Part of the 30S ribosomal subunit. Contacts proteins S5 and S12.

One of the primary rRNA binding proteins, it binds directly to 16S rRNA central domain where it helps coordinate assembly of the platform of the 30S subunit. This chain is Small ribosomal subunit protein uS8, found in Vibrio atlanticus (strain LGP32) (Vibrio splendidus (strain Mel32)).